A 142-amino-acid chain; its full sequence is Large ribosomal subunit protein uL13 (142 aa).

This sequence belongs to the universal ribosomal protein uL13 family. In terms of assembly, part of the 50S ribosomal subunit.

Functionally, this protein is one of the early assembly proteins of the 50S ribosomal subunit, although it is not seen to bind rRNA by itself. It is important during the early stages of 50S assembly. The polypeptide is Large ribosomal subunit protein uL13 (Serratia proteamaculans (strain 568)).